The sequence spans 375 residues: Phosphoribulokinase, chloroplastic (375 aa).

Residues Met1–Ala31 constitute a chloroplast transit peptide. The cysteines at positions 47 and 86 are disulfide-linked.

It belongs to the phosphoribulokinase family. As to quaternary structure, component of a complex that contains two dimers of PRK, two tetramers of GAPDH and CP12.

The protein resides in the plastid. The protein localises to the chloroplast. It carries out the reaction D-ribulose 5-phosphate + ATP = D-ribulose 1,5-bisphosphate + ADP + H(+). It functions in the pathway carbohydrate biosynthesis; Calvin cycle. Its activity is regulated as follows. Light regulated via thioredoxin by reversible oxidation/reduction of sulfhydryl/disulfide groups. The polypeptide is Phosphoribulokinase, chloroplastic (PRKA) (Chlamydomonas reinhardtii (Chlamydomonas smithii)).